The sequence spans 917 residues: Protein STE5 (917 aa).

Disordered stretches follow at residues 1–25 (MMETPTDNIVSPFHNFGSSTQYSGT) and 58–151 (FQRS…LSDN). Residues 16–25 (FGSSTQYSGT) are compositionally biased toward polar residues. Positions 69 to 84 (SPSPISSSTFSFSPKS) are enriched in low complexity. Composition is skewed to polar residues over residues 85–110 (RVTSSNSSGNEDGNLMNTPSTVSTDY) and 118–138 (TSSLPRPNSNLFHASNSNLSR). Ser-329 carries the phosphoserine modification. The segment covering 778 to 794 (HDDDDEEDNDDSTDNEL) has biased composition (acidic residues). The interval 778-821 (HDDDDEEDNDDSTDNELDNSSGSLSDAESTTTIHIDSPFDNENA) is disordered. The span at 799–821 (GSLSDAESTTTIHIDSPFDNENA) shows a compositional bias: polar residues.

The protein to yeast FAR1. Post-translationally, may be regulated at the phosphorylation level, and by the mating type of the cell and depends on an intact pheromone-response pathway.

The protein localises to the cytoplasm. Its function is as follows. Component of the pheromone signal transduction pathway. It mediates pheromone signals acting between STE20 and STE11. It is absolutely required for pheromone-induced transcription of FUS1. May play a role in cell-cycle arrest in response to pheromone. This chain is Protein STE5 (STE5), found in Saccharomyces cerevisiae (strain ATCC 204508 / S288c) (Baker's yeast).